The primary structure comprises 962 residues: Phagocyte signaling-impaired protein (962 aa).

TPR repeat units lie at residues 45-78 (LCAR…KPTD), 79-112 (DSTL…NPGN), and 523-560 (QIQL…FTNS). The segment at 856–880 (TKVKKKQGDNKTQDTPQPVSEKERS) is disordered.

Belongs to the MDM20/NAA25 family. In terms of assembly, component of the N-terminal acetyltransferase B (NatB) complex.

It localises to the lysosome. In terms of biological role, non-catalytic subunit of the NatB complex which catalyzes acetylation of the N-terminal methionine residues of proteins beginning with Met-Asp or Met-Glu. Has 2 roles in the larval immune response: required both for the phagocytic degradation of internalized bacteria and for the induction of Defensin in the fat body. Within the phagocytic blood cells, has a role in detection of infection and activation of the humoral immune response. In Drosophila pseudoobscura pseudoobscura (Fruit fly), this protein is Phagocyte signaling-impaired protein.